The sequence spans 585 residues: MAGUK p55 subfamily member 3 (585 aa).

2 L27 domains span residues 6-60 and 61-118; these read EDSG…ERQS and PTPV…FDPV. The 82-residue stretch at 137-218 folds into the PDZ domain; sequence IVRLVKNKEP…SITLKIIPAT (82 aa). The region spanning 226-296 is the SH3 domain; the sequence is ESKVFMRALF…PSKQFQERRL (71 aa). Ser-307 bears the Phosphoserine mark. The Guanylate kinase-like domain maps to 385–570; that stretch reads SRLVVLIGSL…VCSQLRAVIE (186 aa). The interval 510–530 is disordered; that stretch reads KRKTPPVSPDSEDPATPLDEQ.

It belongs to the MAGUK family. As to quaternary structure, interacts with HTR2C; this interaction stabilizes the receptor at the plasma membrane and prevents the desensitization of the HTR2C receptor-mediated calcium response. Interacts with HTR2A. Interacts with HTR4. Interacts (via PDZ domain) with CADM1 (via C-terminus)Interacts (via PDZ domain) with CADM1; this interaction connects CADM1 with DLG1. Interacts (via Guanylate kinase-like domain) with PALS1. Interacts with DLG1 (via N-terminus); this interaction connects CADM1 with DLG1 and links CADM1 with the regulatory subunit of phosphoinositide-3-kinase (PI3K) by forming a multiprotein complex and participates in cell spreading.

It is found in the apical cell membrane. The protein localises to the cell membrane. Its subcellular location is the cell junction. It localises to the adherens junction. In terms of biological role, participates in cell spreading through the phosphoinositide-3-kinase (PI3K) pathway by connecting CADM1 to DLG1 and the regulatory subunit of phosphoinositide-3-kinase (PI3K). Stabilizes HTR2C at the plasma membrane and prevents its desensitization. May participates in the maintenance of adherens junctions. The sequence is that of MAGUK p55 subfamily member 3 from Rattus norvegicus (Rat).